Here is a 453-residue protein sequence, read N- to C-terminus: Serine incorporator 1 (453 aa).

Residue G2 is the site of N-myristoyl glycine attachment. At 2-39 the chain is on the cytoplasmic side; that stretch reads GSVLGLCSVASWIPCLCGSAPCLLCRCCPSGNNSTVTR. A helical membrane pass occupies residues 40–60; the sequence is LIYALFLLVGVCVACVMLIPG. At 61 to 88 the chain is on the lumenal side; that stretch reads MEEQLNKIPGFCENEKGVVPCNILVGYK. A helical transmembrane segment spans residues 89-109; the sequence is AVYRLCFGLAMFYLLLSLLMI. Residues 110–123 are Cytoplasmic-facing; the sequence is KVKSSSDPRAAVHN. Residues 124–144 traverse the membrane as a helical segment; that stretch reads GFWFFKFATAVAIIIGAFFIP. Residues 145 to 151 lie on the Lumenal side of the membrane; that stretch reads EGTFTTV. Residues 152-172 traverse the membrane as a helical segment; the sequence is WFYVGMAGAFCFILIQLVLLI. Over 173–197 the chain is Cytoplasmic; it reads DFAHSWNESWVEKMEEGNSRCWYAA. A helical transmembrane segment spans residues 198–218; sequence LLSATALNYLLSLVAVVLFFV. The Lumenal portion of the chain corresponds to 219 to 231; the sequence is YYTHPASCAENKA. The chain crosses the membrane as a helical span at residues 232-252; sequence FISVNMLLCIGASVMSILPKI. At 253-259 the chain is on the cytoplasmic side; sequence QESQPRS. The chain crosses the membrane as a helical span at residues 260 to 280; that stretch reads GLLQSSVITVYTMYLTWSAMT. The Lumenal portion of the chain corresponds to 281-309; the sequence is NEPETNCNPSLLSIIGFNTTRPIPKDGQS. Residues 310–330 traverse the membrane as a helical segment; the sequence is VQWWHPQGIIGLVLFLLCVFY. Over 331–387 the chain is Cytoplasmic; that stretch reads SSIRTSNNSQVNKLTLTSDESTLIEDGNGRSDGSLDDGDGIHRAVDNERDGVTYSYS. Residue S351 is modified to Phosphoserine. T352 bears the Phosphothreonine mark. 2 positions are modified to phosphoserine: S361 and S364. A helical transmembrane segment spans residues 388-408; the sequence is FFHFMLFLASLYIMMTLTNWY. At 409–426 the chain is on the lumenal side; sequence RYEPSREMKSQWTAVWVK. Residues 427-447 traverse the membrane as a helical segment; the sequence is ISSSWIGLVLYVWTLVAPLVL. Over 448-453 the chain is Cytoplasmic; sequence TNRDFD.

It belongs to the TDE1 family. As to quaternary structure, interacts with SPTLC1. In terms of tissue distribution, highly expressed in the neuronal populations such as Purkinje cells in the cerebellum, brainstem and spinal motor neurons, locus coeruleus and raphe nuclei.

It is found in the endoplasmic reticulum membrane. Functionally, enhances the incorporation of serine into phosphatidylserine and sphingolipids. The polypeptide is Serine incorporator 1 (Serinc1) (Mus musculus (Mouse)).